A 378-amino-acid polypeptide reads, in one-letter code: Cytochrome b (378 aa).

4 helical membrane passes run 34-54 (FGSL…FLAM), 78-99 (WLLR…YLHV), 114-134 (WLVG…GYVL), and 179-199 (FFTF…IHIL). Heme b is bound by residues histidine 84 and histidine 98. Residues histidine 183 and histidine 197 each contribute to the heme b site. Residue histidine 202 coordinates a ubiquinone. Helical transmembrane passes span 227–247 (FKDI…VLIN), 289–309 (LGGV…PFYH), 321–341 (INQI…WIGA), and 348–368 (YVLV…FNPL).

This sequence belongs to the cytochrome b family. The main subunits of complex b-c1 are: cytochrome b, cytochrome c1 and the Rieske protein. It depends on heme b as a cofactor.

The protein resides in the mitochondrion inner membrane. In terms of biological role, component of the ubiquinol-cytochrome c reductase complex (complex III or cytochrome b-c1 complex) that is part of the mitochondrial respiratory chain. The b-c1 complex mediates electron transfer from ubiquinol to cytochrome c. Contributes to the generation of a proton gradient across the mitochondrial membrane that is then used for ATP synthesis. The chain is Cytochrome b (MT-CYB) from Cochliomyia hominivorax (Primary screw-worm).